A 76-amino-acid polypeptide reads, in one-letter code: Bomanin Tailed 2 (76 aa).

Positions 1–22 (MKALQVAGTLMLLFCLLAAVNA) are cleaved as a signal peptide. Residues 23-24 (TP) constitute a propeptide, removed by a dipeptidylpeptidase. A disulfide bridge connects residues Cys-33 and Cys-36.

It belongs to the bomanin family.

It localises to the secreted. Its function is as follows. Secreted immune-induced peptide induced by Toll signaling. Has a role in resistance to bacterial and fungal infections. The strength of antimicrobial activity appears to correlate with the overall level of expression. The chain is Bomanin Tailed 2 from Drosophila melanogaster (Fruit fly).